The following is a 422-amino-acid chain: Serine--tRNA ligase (422 aa).

229 to 231 (TAE) provides a ligand contact to L-serine. 258–260 (RRE) is a binding site for ATP. E281 serves as a coordination point for L-serine. 345 to 348 (EISS) contributes to the ATP binding site. S379 is an L-serine binding site.

This sequence belongs to the class-II aminoacyl-tRNA synthetase family. Type-1 seryl-tRNA synthetase subfamily. Homodimer. The tRNA molecule binds across the dimer.

It is found in the cytoplasm. It catalyses the reaction tRNA(Ser) + L-serine + ATP = L-seryl-tRNA(Ser) + AMP + diphosphate + H(+). It carries out the reaction tRNA(Sec) + L-serine + ATP = L-seryl-tRNA(Sec) + AMP + diphosphate + H(+). It functions in the pathway aminoacyl-tRNA biosynthesis; selenocysteinyl-tRNA(Sec) biosynthesis; L-seryl-tRNA(Sec) from L-serine and tRNA(Sec): step 1/1. Functionally, catalyzes the attachment of serine to tRNA(Ser). Is also able to aminoacylate tRNA(Sec) with serine, to form the misacylated tRNA L-seryl-tRNA(Sec), which will be further converted into selenocysteinyl-tRNA(Sec). This Methanosarcina mazei (strain ATCC BAA-159 / DSM 3647 / Goe1 / Go1 / JCM 11833 / OCM 88) (Methanosarcina frisia) protein is Serine--tRNA ligase.